A 98-amino-acid polypeptide reads, in one-letter code: NADH-ubiquinone oxidoreductase chain 4L (98 aa).

A run of 3 helical transmembrane segments spans residues 2 to 22, 29 to 49, and 61 to 81; these read TPIFTNIILAFATAFLGTLIF, SLLCLEGMMLSLFILSTLIIL, and ILLLVFAACEAAIGLALLVMV.

The protein belongs to the complex I subunit 4L family. Core subunit of respiratory chain NADH dehydrogenase (Complex I) which is composed of 45 different subunits.

It localises to the mitochondrion inner membrane. It catalyses the reaction a ubiquinone + NADH + 5 H(+)(in) = a ubiquinol + NAD(+) + 4 H(+)(out). Its function is as follows. Core subunit of the mitochondrial membrane respiratory chain NADH dehydrogenase (Complex I) which catalyzes electron transfer from NADH through the respiratory chain, using ubiquinone as an electron acceptor. Part of the enzyme membrane arm which is embedded in the lipid bilayer and involved in proton translocation. The polypeptide is NADH-ubiquinone oxidoreductase chain 4L (MT-ND4L) (Avahi cleesei (Cleese's woolly lemur)).